We begin with the raw amino-acid sequence, 670 residues long: tRNA 5-methylaminomethyl-2-thiouridine biosynthesis bifunctional protein MnmC (670 aa).

A tRNA (mnm(5)s(2)U34)-methyltransferase region spans residues 1–242; it reads MTFSVQHAEI…KRECLSGLKI (242 aa). Residues 269-670 are FAD-dependent cmnm(5)s(2)U34 oxidoreductase; sequence IGGGIASLCA…KKWLKGSKVE (402 aa).

This sequence in the N-terminal section; belongs to the methyltransferase superfamily. tRNA (mnm(5)s(2)U34)-methyltransferase family. The protein in the C-terminal section; belongs to the DAO family. FAD serves as cofactor.

Its subcellular location is the cytoplasm. The catalysed reaction is 5-aminomethyl-2-thiouridine(34) in tRNA + S-adenosyl-L-methionine = 5-methylaminomethyl-2-thiouridine(34) in tRNA + S-adenosyl-L-homocysteine + H(+). In terms of biological role, catalyzes the last two steps in the biosynthesis of 5-methylaminomethyl-2-thiouridine (mnm(5)s(2)U) at the wobble position (U34) in tRNA. Catalyzes the FAD-dependent demodification of cmnm(5)s(2)U34 to nm(5)s(2)U34, followed by the transfer of a methyl group from S-adenosyl-L-methionine to nm(5)s(2)U34, to form mnm(5)s(2)U34. This chain is tRNA 5-methylaminomethyl-2-thiouridine biosynthesis bifunctional protein MnmC, found in Haemophilus influenzae (strain PittGG).